Reading from the N-terminus, the 189-residue chain is Small ribosomal subunit protein uS5 (189 aa).

The 64-residue stretch at 22 to 85 (FVDKLVAINR…EAAKRELIFV (64 aa)) folds into the S5 DRBM domain.

Belongs to the universal ribosomal protein uS5 family. In terms of assembly, part of the 30S ribosomal subunit. Contacts proteins S4 and S8.

In terms of biological role, with S4 and S12 plays an important role in translational accuracy. Its function is as follows. Located at the back of the 30S subunit body where it stabilizes the conformation of the head with respect to the body. In Rhizobium johnstonii (strain DSM 114642 / LMG 32736 / 3841) (Rhizobium leguminosarum bv. viciae), this protein is Small ribosomal subunit protein uS5.